We begin with the raw amino-acid sequence, 105 residues long: Phosphoribosyl-ATP pyrophosphatase (105 aa).

It belongs to the PRA-PH family.

It localises to the cytoplasm. It carries out the reaction 1-(5-phospho-beta-D-ribosyl)-ATP + H2O = 1-(5-phospho-beta-D-ribosyl)-5'-AMP + diphosphate + H(+). The protein operates within amino-acid biosynthesis; L-histidine biosynthesis; L-histidine from 5-phospho-alpha-D-ribose 1-diphosphate: step 2/9. The sequence is that of Phosphoribosyl-ATP pyrophosphatase from Methylococcus capsulatus (strain ATCC 33009 / NCIMB 11132 / Bath).